The sequence spans 225 residues: Glucosyl-3-phosphoglycerate phosphatase (225 aa).

Arginine 10 is a binding site for substrate. Histidine 11 functions as the Tele-phosphohistidine intermediate in the catalytic mechanism. Arginine 60 contacts substrate. The Proton donor/acceptor role is filled by glutamate 84. Histidine 158 contacts substrate.

It belongs to the phosphoglycerate mutase family. Homodimer.

It carries out the reaction (2R)-2-O-(alpha-D-glucopyranosyl)-3-phospho-glycerate + H2O = (2R)-2-O-(alpha-D-glucopyranosyl)-glycerate + phosphate. Functionally, involved in the biosynthesis of mycobacterial methylglucose lipopolysaccharides (MGLP). Catalyzes the dephosphorylation of glucosyl-3-phosphoglycerate (GPG) to glucosylglycerate. This chain is Glucosyl-3-phosphoglycerate phosphatase, found in Mycolicibacterium vanbaalenii (strain DSM 7251 / JCM 13017 / BCRC 16820 / KCTC 9966 / NRRL B-24157 / PYR-1) (Mycobacterium vanbaalenii).